The chain runs to 84 residues: Sulfur carrier protein TusA (84 aa).

The active-site Cysteine persulfide intermediate is the C19.

This sequence belongs to the sulfur carrier protein TusA family. Interacts with IscS.

The protein resides in the cytoplasm. The protein operates within tRNA modification. Its function is as follows. Sulfur carrier protein involved in sulfur trafficking in the cell. Part of a sulfur-relay system required for 2-thiolation during synthesis of 2-thiouridine of the modified wobble base 5-methylaminomethyl-2-thiouridine (mnm(5)s(2)U) in tRNA. Interacts with IscS and stimulates its cysteine desulfurase activity. Accepts an activated sulfur from IscS, which is then transferred to TusD, and thus determines the direction of sulfur flow from IscS to 2-thiouridine formation. Also appears to be involved in sulfur transfer for the biosynthesis of molybdopterin. This chain is Sulfur carrier protein TusA, found in Proteus mirabilis (strain HI4320).